The sequence spans 284 residues: D-tagatose-1,6-bisphosphate aldolase subunit GatY (284 aa).

D82 functions as the Proton donor in the catalytic mechanism. Positions 83 and 180 each coordinate Zn(2+). G181 contributes to the dihydroxyacetone phosphate binding site. H208 is a Zn(2+) binding site. Residues 209–211 (GAS) and 230–233 (NVAT) contribute to the dihydroxyacetone phosphate site.

The protein belongs to the class II fructose-bisphosphate aldolase family. TagBP aldolase GatY subfamily. As to quaternary structure, forms a complex with GatZ. Requires Zn(2+) as cofactor.

It catalyses the reaction D-tagatofuranose 1,6-bisphosphate = D-glyceraldehyde 3-phosphate + dihydroxyacetone phosphate. It functions in the pathway carbohydrate metabolism; D-tagatose 6-phosphate degradation; D-glyceraldehyde 3-phosphate and glycerone phosphate from D-tagatose 6-phosphate: step 2/2. In terms of biological role, catalytic subunit of the tagatose-1,6-bisphosphate aldolase GatYZ, which catalyzes the reversible aldol condensation of dihydroxyacetone phosphate (DHAP or glycerone-phosphate) with glyceraldehyde 3-phosphate (G3P) to produce tagatose 1,6-bisphosphate (TBP). Requires GatZ subunit for full activity and stability. Is involved in the catabolism of galactitol. The polypeptide is D-tagatose-1,6-bisphosphate aldolase subunit GatY (gatY) (Escherichia coli).